The chain runs to 43 residues: Metallothionein A (43 aa).

A beta region spans residues 1-16; the sequence is SCAGSCKCKNCRCRSC. The a divalent metal cation site is built by Cys2, Cys6, Cys8, Cys11, Cys13, Cys16, Cys20, Cys21, Cys23, Cys24, Cys28, Cys31, Cys35, and Cys37. Residues 17 to 43 are alpha; the sequence is RKSCCSCCPAGCNNCAKGCVCKEPASS.

Belongs to the metallothionein superfamily. Type 1 family.

Functionally, metallothioneins have a high content of cysteine residues that bind various heavy metals. This Colinus virginianus (Northern bobwhite) protein is Metallothionein A.